The chain runs to 310 residues: MVKVYAPASSANMSVGFDVLGAAVTPVDGALLGDVVTVEAAETFSLNNLGRFADKLPSEPRENIVYQCWERFCQELGKQIPVAMTLEKNMPIGSGLGSSACSVVAALMAMNEHCGKPLNDTRLLALMGELEGRISGSIHYDNVAPCFLGGMQLMIEENDIISQQVPGFDEWLWVLAYPGIKVSTAEARAILPAQYRRQDCIAHGRHLAGFIHACYSRQPELAAKLMKDVIAEPYRERLLPGFRQARQAVAEIGAVASGISGSGPTLFALCDKPDTAQRVADWLGKNYLQNQEGFVHICRLDTAGARVLEN.

91-101 (PIGSGLGSSAC) is a binding site for ATP.

It belongs to the GHMP kinase family. Homoserine kinase subfamily.

It localises to the cytoplasm. The enzyme catalyses L-homoserine + ATP = O-phospho-L-homoserine + ADP + H(+). It participates in amino-acid biosynthesis; L-threonine biosynthesis; L-threonine from L-aspartate: step 4/5. Its function is as follows. Catalyzes the ATP-dependent phosphorylation of L-homoserine to L-homoserine phosphate. This Escherichia coli O139:H28 (strain E24377A / ETEC) protein is Homoserine kinase.